Here is a 95-residue protein sequence, read N- to C-terminus: RING finger protein Z (95 aa).

Gly2 carries the N-myristoyl glycine; by host lipid modification. The segment at 38–74 (CKRCWFATKGLIACSDHYLCLNCLTIMLSDGNFCEVC) adopts an RING-type; atypical zinc-finger fold. The short motif at 88 to 91 (PSAP) is the PTAP/PSAP motif element.

It belongs to the arenaviridae Z protein family. As to quaternary structure, interacts with protein NP; this interaction probably directs the encapsidated genome to budding sites. Interacts (via RING domain) with polymerase L; this interaction inhibits viral transcription and replication, Z partially blocks the product exit tunnel for the releasing nascent RNA product. Interacts with the glycoprotein complex; this interaction plays a role in virion budding. Interacts with host eIF4E; this interaction results in eIF4E reduced affinity for its substrate, the 5'-m7 G cap structure. Interacts (via late-budding domain) with host TSG101; this interaction is essential for budding and release of viral particles. Interacts with host RPLP0; this interaction may serve to load ribosome-like particles inside the virion. Interacts with host PML; this interaction induces PML bodies redistribution in the cytoplasm upon viral infection. Post-translationally, myristoylation is required for the role of RING finger protein Z in assembly and budding.

The protein resides in the virion. Its subcellular location is the host cytoplasm. It localises to the host perinuclear region. It is found in the host cell membrane. Functionally, plays a crucial role in virion assembly and budding. Expressed late in the virus life cycle, it acts as an inhibitor of viral transcription and RNA synthesis by interacting with the viral polymerase L. Presumably recruits the NP encapsidated genome to cellular membranes at budding sites via direct interaction with NP. Plays critical roles in the final steps of viral release by interacting with host TSG101, a member of the vacuolar protein-sorting pathway and using other cellular host proteins involved in vesicle formation pathway. The budding of the virus progeny occurs after association of protein Z with the viral glycoprotein complex SSP-GP1-GP2 at the cell periphery, step that requires myristoylation of protein Z. Also selectively represses protein production by associating with host eIF4E. In cell-based minigenome assay, has an inhibitory effect on the ribonucleoprotein machinery (vRNP), which is responsible for the replication and transcription of the viral genome. The chain is RING finger protein Z from Sooretamys angouya (Paraguayan rice rat).